The chain runs to 392 residues: L-rhamnonate dehydratase (392 aa).

Positions 22 and 48 each coordinate substrate. Mg(2+) contacts are provided by Asp214, Glu240, and Glu268. Catalysis depends on His318, which acts as the Proton acceptor. A substrate-binding site is contributed by Glu338.

This sequence belongs to the mandelate racemase/muconate lactonizing enzyme family. RhamD subfamily. In terms of assembly, homooctamer; tetramer of dimers. Requires Mg(2+) as cofactor.

The catalysed reaction is L-rhamnonate = 2-dehydro-3-deoxy-L-rhamnonate + H2O. Functionally, catalyzes the dehydration of L-rhamnonate to 2-keto-3-deoxy-L-rhamnonate (KDR). The chain is L-rhamnonate dehydratase from Burkholderia orbicola (strain MC0-3).